The following is a 408-amino-acid chain: Aminomethyltransferase, mitochondrial (408 aa).

The transit peptide at 1-30 (MRGGLWQLGQSITRRLANGGDKKAVARRCF) directs the protein to the mitochondrion. Substrate-binding residues include Glu-235, Arg-266, and Tyr-404.

This sequence belongs to the GcvT family. In terms of assembly, the glycine cleavage system is composed of four proteins: P, T, L and H.

It is found in the mitochondrion. It carries out the reaction N(6)-[(R)-S(8)-aminomethyldihydrolipoyl]-L-lysyl-[protein] + (6S)-5,6,7,8-tetrahydrofolate = N(6)-[(R)-dihydrolipoyl]-L-lysyl-[protein] + (6R)-5,10-methylene-5,6,7,8-tetrahydrofolate + NH4(+). Functionally, the glycine cleavage system catalyzes the degradation of glycine. The chain is Aminomethyltransferase, mitochondrial (GDCST) from Pisum sativum (Garden pea).